A 61-amino-acid polypeptide reads, in one-letter code: Large ribosomal subunit protein uL30 (61 aa).

The protein belongs to the universal ribosomal protein uL30 family. In terms of assembly, part of the 50S ribosomal subunit.

The protein is Large ribosomal subunit protein uL30 of Clostridioides difficile (strain 630) (Peptoclostridium difficile).